The chain runs to 283 residues: Acetylglutamate kinase (283 aa).

Residues 64–65 (GG), Arg-86, and Asn-178 contribute to the substrate site.

The protein belongs to the acetylglutamate kinase family. ArgB subfamily.

The protein localises to the cytoplasm. The enzyme catalyses N-acetyl-L-glutamate + ATP = N-acetyl-L-glutamyl 5-phosphate + ADP. Its pathway is amino-acid biosynthesis; L-arginine biosynthesis; N(2)-acetyl-L-ornithine from L-glutamate: step 2/4. Catalyzes the ATP-dependent phosphorylation of N-acetyl-L-glutamate. The chain is Acetylglutamate kinase from Lactococcus lactis subsp. lactis (strain IL1403) (Streptococcus lactis).